Reading from the N-terminus, the 704-residue chain is Methionine--tRNA ligase (704 aa).

Residues 17–27 carry the 'HIGH' region motif; that stretch reads PYANGPIHLGH. Residues Cys148, Cys151, Cys161, and Cys164 each contribute to the Zn(2+) site. The 'KMSKS' region signature appears at 348-352; sequence KMSKS. Residue Lys351 coordinates ATP. Positions 603 to 704 constitute a tRNA-binding domain; that stretch reads ELSKVELRVG…KDAKPGDRLK (102 aa).

This sequence belongs to the class-I aminoacyl-tRNA synthetase family. MetG type 1 subfamily. Homodimer. The cofactor is Zn(2+).

It is found in the cytoplasm. The enzyme catalyses tRNA(Met) + L-methionine + ATP = L-methionyl-tRNA(Met) + AMP + diphosphate. Its function is as follows. Is required not only for elongation of protein synthesis but also for the initiation of all mRNA translation through initiator tRNA(fMet) aminoacylation. The protein is Methionine--tRNA ligase of Leptospira borgpetersenii serovar Hardjo-bovis (strain L550).